A 689-amino-acid polypeptide reads, in one-letter code: DNA-directed RNA polymerase subunit beta' (689 aa).

Zn(2+) is bound by residues C69, C71, C87, and C90. The Mg(2+) site is built by D489, D491, and D493.

The protein belongs to the RNA polymerase beta' chain family. RpoC1 subfamily. As to quaternary structure, in plastids the minimal PEP RNA polymerase catalytic core is composed of four subunits: alpha, beta, beta', and beta''. When a (nuclear-encoded) sigma factor is associated with the core the holoenzyme is formed, which can initiate transcription. Mg(2+) serves as cofactor. The cofactor is Zn(2+).

It is found in the plastid. The protein resides in the chloroplast. The enzyme catalyses RNA(n) + a ribonucleoside 5'-triphosphate = RNA(n+1) + diphosphate. DNA-dependent RNA polymerase catalyzes the transcription of DNA into RNA using the four ribonucleoside triphosphates as substrates. This Helianthus annuus (Common sunflower) protein is DNA-directed RNA polymerase subunit beta'.